We begin with the raw amino-acid sequence, 1084 residues long: Carbamoyl phosphate synthase large chain (1084 aa).

Positions Met-1–Glu-401 are carboxyphosphate synthetic domain. 12 residues coordinate ATP: Arg-129, Arg-169, Gly-175, Gly-176, Arg-208, Leu-210, Glu-215, Gly-241, Val-242, His-243, Gln-284, and Glu-298. The 195-residue stretch at Arg-133–Val-327 folds into the ATP-grasp 1 domain. Residues Gln-284, Glu-298, and Asn-300 each contribute to the Mg(2+) site. The Mn(2+) site is built by Gln-284, Glu-298, and Asn-300. Residues Thr-402–Ala-546 are oligomerization domain. Positions Val-547–Gly-947 are carbamoyl phosphate synthetic domain. In terms of domain architecture, ATP-grasp 2 spans Asp-672 to Ala-862. ATP contacts are provided by Arg-708, Arg-747, Glu-753, Gly-778, Val-779, His-780, Ser-781, Gln-821, and Glu-833. Positions 821, 833, and 835 each coordinate Mg(2+). Mn(2+)-binding residues include Gln-821, Glu-833, and Asn-835. The MGS-like domain maps to Val-948 to Val-1084. Residues Val-948–Val-1084 form an allosteric domain region.

It belongs to the CarB family. In terms of assembly, composed of two chains; the small (or glutamine) chain promotes the hydrolysis of glutamine to ammonia, which is used by the large (or ammonia) chain to synthesize carbamoyl phosphate. Tetramer of heterodimers (alpha,beta)4. Mg(2+) is required as a cofactor. The cofactor is Mn(2+).

The enzyme catalyses hydrogencarbonate + L-glutamine + 2 ATP + H2O = carbamoyl phosphate + L-glutamate + 2 ADP + phosphate + 2 H(+). It carries out the reaction hydrogencarbonate + NH4(+) + 2 ATP = carbamoyl phosphate + 2 ADP + phosphate + 2 H(+). It participates in amino-acid biosynthesis; L-arginine biosynthesis; carbamoyl phosphate from bicarbonate: step 1/1. Its pathway is pyrimidine metabolism; UMP biosynthesis via de novo pathway; (S)-dihydroorotate from bicarbonate: step 1/3. Its function is as follows. Large subunit of the glutamine-dependent carbamoyl phosphate synthetase (CPSase). CPSase catalyzes the formation of carbamoyl phosphate from the ammonia moiety of glutamine, carbonate, and phosphate donated by ATP, constituting the first step of 2 biosynthetic pathways, one leading to arginine and/or urea and the other to pyrimidine nucleotides. The large subunit (synthetase) binds the substrates ammonia (free or transferred from glutamine from the small subunit), hydrogencarbonate and ATP and carries out an ATP-coupled ligase reaction, activating hydrogencarbonate by forming carboxy phosphate which reacts with ammonia to form carbamoyl phosphate. This Symbiobacterium thermophilum (strain DSM 24528 / JCM 14929 / IAM 14863 / T) protein is Carbamoyl phosphate synthase large chain.